The sequence spans 100 residues: Large ribosomal subunit protein bL21 (100 aa).

It belongs to the bacterial ribosomal protein bL21 family. Part of the 50S ribosomal subunit. Contacts protein L20.

Its function is as follows. This protein binds to 23S rRNA in the presence of protein L20. The polypeptide is Large ribosomal subunit protein bL21 (Paramagnetospirillum magneticum (strain ATCC 700264 / AMB-1) (Magnetospirillum magneticum)).